The chain runs to 208 residues: Large ribosomal subunit protein bL25 (208 aa).

The tract at residues 188-208 is disordered; it reads AVETETEEETTTGESPAQPAE.

This sequence belongs to the bacterial ribosomal protein bL25 family. CTC subfamily. In terms of assembly, part of the 50S ribosomal subunit; part of the 5S rRNA/L5/L18/L25 subcomplex. Contacts the 5S rRNA. Binds to the 5S rRNA independently of L5 and L18.

In terms of biological role, this is one of the proteins that binds to the 5S RNA in the ribosome where it forms part of the central protuberance. The protein is Large ribosomal subunit protein bL25 of Moorella thermoacetica (strain ATCC 39073 / JCM 9320).